We begin with the raw amino-acid sequence, 155 residues long: Small ribosomal subunit protein uS7 (155 aa).

The protein belongs to the universal ribosomal protein uS7 family. Part of the 30S ribosomal subunit. Contacts proteins S9 and S11.

In terms of biological role, one of the primary rRNA binding proteins, it binds directly to 16S rRNA where it nucleates assembly of the head domain of the 30S subunit. Is located at the subunit interface close to the decoding center, probably blocks exit of the E-site tRNA. The protein is Small ribosomal subunit protein uS7 of Chlorobium phaeovibrioides (strain DSM 265 / 1930) (Prosthecochloris vibrioformis (strain DSM 265)).